The chain runs to 230 residues: uncharacterized protein (230 aa).

Disordered stretches follow at residues 63 to 90 and 194 to 230; these read TDCQ…KKTI and KKLE…YKEH. Residues 194-217 are compositionally biased toward basic and acidic residues; that stretch reads KKLEEREQMDKHPQDRDNKDKEVN.

This is an uncharacterized protein from Caenorhabditis elegans.